A 100-amino-acid chain; its full sequence is C-X-C motif chemokine 3 (100 aa).

The N-terminal stretch at 1–31 (MAPPTCRLLSAALVLLLLLATNHQATGAVVA) is a signal peptide. Disulfide bonds link Cys36–Cys62 and Cys38–Cys78.

The protein belongs to the intercrine alpha (chemokine CxC) family.

It is found in the secreted. In terms of biological role, ligand for CXCR2. Has chemotactic activity for neutrophils. May play a role in inflammation and exert its effects on endothelial cells in an autocrine fashion. This Mus musculus (Mouse) protein is C-X-C motif chemokine 3.